Here is a 466-residue protein sequence, read N- to C-terminus: Argininosuccinate lyase (466 aa).

The protein belongs to the lyase 1 family. Argininosuccinate lyase subfamily.

Its subcellular location is the cytoplasm. It carries out the reaction 2-(N(omega)-L-arginino)succinate = fumarate + L-arginine. Its pathway is amino-acid biosynthesis; L-arginine biosynthesis; L-arginine from L-ornithine and carbamoyl phosphate: step 3/3. This is Argininosuccinate lyase from Desulfovibrio desulfuricans (strain ATCC 27774 / DSM 6949 / MB).